Consider the following 302-residue polypeptide: GLABROUS1 enhancer-binding protein (302 aa).

Disordered regions lie at residues 1-55 (MVTP…MKKK) and 158-229 (GQGD…NDDD). A Phosphoserine modification is found at Ser-27. The segment covering 180–195 (RTNESGEEMLKEHEEE) has biased composition (basic and acidic residues). Residues 208–217 (AKTTENGTSS) show a composition bias toward polar residues. A non-canonical leucine-zipper region spans residues 270–291 (LSDEWKALCVEETRFNIKKLRF).

This sequence belongs to the GeBP family. As to quaternary structure, homo- and heterodimers. Interacts with GPL1, GPL2 and GPL3. Interacts with KIN10, KIN11 and FLZ4. Interacts with KIN10 and KIN11 via its N-terminal part. Interacts with GPL1 and GPL3 via its C-terminal part. As to expression, expressed in the apical meristem and young leaf primordia. Not detected in emerging or mature leaves. Detected in the vascular tissues of cotyledons and leaves, in hydathodes and at the base of flowers and siliques, but not in roots.

It is found in the nucleus. It localises to the nucleolus. Functionally, DNA-binding protein, which specifically recognizes the GL1 enhancer sequence. May be involved in leaf initiation. May play redundant roles with GPL1 and GPL2 in cytokinin responses by regulating the transcript levels of type-A ARR response genes. Involved in stress responses. Plays a repressive role in cell expansion by counteracting the positive role of CPR5 in this process, but does not regulate cell proliferation or endoreduplication. May play a role in plant defense. The protein is GLABROUS1 enhancer-binding protein of Arabidopsis thaliana (Mouse-ear cress).